Reading from the N-terminus, the 861-residue chain is DNA mismatch repair protein MutS (861 aa).

618 to 625 serves as a coordination point for ATP; sequence GPNMGGKS.

The protein belongs to the DNA mismatch repair MutS family.

Functionally, this protein is involved in the repair of mismatches in DNA. It is possible that it carries out the mismatch recognition step. This protein has a weak ATPase activity. The protein is DNA mismatch repair protein MutS of Shewanella sp. (strain MR-7).